Reading from the N-terminus, the 346-residue chain is Upstream stimulatory factor 2 (346 aa).

Disordered stretches follow at residues 1–44 (MDML…PGAE) and 215–244 (APRTHPYSPKIDGTRTPRDERRRAQHNEVE). The span at 11–20 (AASATAAAAA) shows a compositional bias: low complexity. A compositionally biased stretch (basic and acidic residues) spans 226–244 (DGTRTPRDERRRAQHNEVE). A bHLH domain is found at 235-290 (RRRAQHNEVERRRRDKINNWIVQLSKIIPDCNADNSKTGASKGGILSKACDYIREL). Residues 307–328 (LQMDNELLRQQIEELKNENALL) are leucine-zipper.

In terms of assembly, interacts with MAF. Efficient DNA binding requires dimerization with another bHLH protein. Binds DNA as a homodimer or a heterodimer (USF1/USF2). In vivo, the USF1/USF2A heterodimer represents over 66% of the usf binding activity whereas the USF1 and USF2A homodimers represent less than 10%. The USF1/USF2B heterodimer accounted for almost 15% in some cell. In terms of tissue distribution, ubiquitous.

It is found in the nucleus. Transcription factor that binds to a symmetrical DNA sequence (E-boxes) (5'-CACGTG-3') that is found in a variety of viral and cellular promoters. The polypeptide is Upstream stimulatory factor 2 (USF2) (Homo sapiens (Human)).